A 104-amino-acid polypeptide reads, in one-letter code: MKDSEFHALVEGRYQFIEQAIDNCDTDIDCELNSGVVTLTFVNGSKIIINKQEPLHQIWVATRENGYHFDWKDGKWIDNRGGRELIELLSDACSKQSGEKVTLG.

This sequence belongs to the frataxin family.

Its function is as follows. Involved in iron-sulfur (Fe-S) cluster assembly. May act as a regulator of Fe-S biogenesis. This Tolumonas auensis (strain DSM 9187 / NBRC 110442 / TA 4) protein is Iron-sulfur cluster assembly protein CyaY.